Reading from the N-terminus, the 206-residue chain is Large ribosomal subunit protein uL4 (206 aa).

Positions 46–89 are disordered; that stretch reads GNRAQKTRAEVKHSTKKPWRQKGTGRARSGMTSSPLWRKGGRAF. Positions 59 to 70 are enriched in basic residues; it reads STKKPWRQKGTG.

This sequence belongs to the universal ribosomal protein uL4 family. Part of the 50S ribosomal subunit.

One of the primary rRNA binding proteins, this protein initially binds near the 5'-end of the 23S rRNA. It is important during the early stages of 50S assembly. It makes multiple contacts with different domains of the 23S rRNA in the assembled 50S subunit and ribosome. In terms of biological role, forms part of the polypeptide exit tunnel. The sequence is that of Large ribosomal subunit protein uL4 from Neisseria gonorrhoeae (strain NCCP11945).